The following is a 493-amino-acid chain: Lysine--tRNA ligase (493 aa).

Mg(2+)-binding residues include E400 and E407.

This sequence belongs to the class-II aminoacyl-tRNA synthetase family. Homodimer. Requires Mg(2+) as cofactor.

The protein localises to the cytoplasm. The catalysed reaction is tRNA(Lys) + L-lysine + ATP = L-lysyl-tRNA(Lys) + AMP + diphosphate. The sequence is that of Lysine--tRNA ligase from Syntrophomonas wolfei subsp. wolfei (strain DSM 2245B / Goettingen).